A 416-amino-acid chain; its full sequence is Tiggy-winkle hedgehog protein (416 aa).

The N-terminal stretch at 1–26 (MDVRLHLKQFALLCFISLLLTPCGLA) is a signal peptide. Cys27 carries the N-palmitoyl cysteine lipid modification. Residues Glu92, Glu93, Asp98, Thr128, Glu129, Asp132, and Asp134 each coordinate Ca(2+). 3 residues coordinate Zn(2+): His143, Asp150, and His185. Gly200 carries the Cholesterol glycine ester lipid modification.

It belongs to the hedgehog family. In terms of assembly, multimer. Interacts with HHATL/GUP1 which negatively regulates HHAT-mediated palmitoylation of the TWHH N-terminus. Interacts with BOC and CDON. Interacts with HHIP. Interacts with DISP1 via its cholesterol anchor. Interacts with SCUBE2. Post-translationally, the C-terminal domain displays an autoproteolysis activity and a cholesterol transferase activity. Both activities result in the cleavage of the full-length protein into two parts (N-product and C-product) followed by the covalent attachment of a cholesterol moiety to the C-terminal of the newly generated N-product. Cholesterylation is required for the tiggy-winkle hedgehog protein N-product targeting to lipid rafts and multimerization. N-product is the active species in both local and long-range signaling, whereas the C-product is degraded in the endoplasmic reticulum. N-palmitoylation by HHAT of N-product is required for tiggy-winkle hedgehog protein N-product multimerization and full activity. It is a prerequisite for the membrane-proximal positioning and the subsequent shedding of this N-terminal peptide. In terms of processing, the lipidated N- and C-terminal peptides of N-product can be cleaved (shedding). The N-terminal palmitoylated peptide is cleaved at the Cardin-Weintraub (CW) motif site. The cleavage reduced the interactions with heparan sulfate. The cleavage is enhanced by SCUBE2. As to expression, expressed in the ventral midline of the neural tube and brain. In the developing brain, expression occurs in domains that include a discrete region in the floor of the diencephalon. Not detected in the notochord or developing fin bud.

The protein resides in the cell membrane. It localises to the endoplasmic reticulum membrane. The protein localises to the golgi apparatus membrane. The C-terminal part of the tiggy-winkle hedgehog protein precursor displays an autoproteolysis and a cholesterol transferase activity. Both activities result in the cleavage of the full-length protein into two parts (N-product and C-product) followed by the covalent attachment of a cholesterol moiety to the C-terminal of the newly generated N-product. Both activities occur in the endoplasmic reticulum. Once cleaved, the C-product is degraded in the endoplasmic reticulum. Functionally, the dually lipidated tiggy-winkle hedgehog protein N-product is a morphogen which is essential for a variety of patterning events during development. Involved in dorso-ventral patterning of the brain and in early patterning of the developing eyes. Binds to the patched (PTCH1) receptor, which functions in association with smoothened (SMO), to activate the transcription of target genes. The sequence is that of Tiggy-winkle hedgehog protein (shhb) from Danio rerio (Zebrafish).